Consider the following 30-residue polypeptide: Cycloviolacin-O20 (30 aa).

A cross-link (cyclopeptide (Gly-Asp)) is located at residues glycine 1 to aspartate 30. Intrachain disulfides connect cysteine 4/cysteine 20, cysteine 8/cysteine 22, and cysteine 13/cysteine 27.

In terms of processing, this is a cyclic peptide.

Probably participates in a plant defense mechanism. The polypeptide is Cycloviolacin-O20 (Viola odorata (Sweet violet)).